Consider the following 433-residue polypeptide: Phosphoribosylamine--glycine ligase (433 aa).

The 208-residue stretch at 110–317 (RNFMKKYGIE…FVDIMSAVVK (208 aa)) folds into the ATP-grasp domain. Residue 137 to 194 (IEKLGDVAVKPSGLTGGKGVKVMGDQLPDLKAAKAYTSELLEKGSVVIEERFIGEEFT) participates in ATP binding. 3 residues coordinate Mg(2+): Q275, E287, and N289. The Mn(2+) site is built by Q275, E287, and N289.

Belongs to the GARS family. Mg(2+) is required as a cofactor. Mn(2+) serves as cofactor.

It carries out the reaction 5-phospho-beta-D-ribosylamine + glycine + ATP = N(1)-(5-phospho-beta-D-ribosyl)glycinamide + ADP + phosphate + H(+). It participates in purine metabolism; IMP biosynthesis via de novo pathway; N(1)-(5-phospho-D-ribosyl)glycinamide from 5-phospho-alpha-D-ribose 1-diphosphate: step 2/2. The sequence is that of Phosphoribosylamine--glycine ligase from Methanosarcina barkeri (strain Fusaro / DSM 804).